Here is an 88-residue protein sequence, read N- to C-terminus: Sec-independent protein translocase protein TatA (88 aa).

The chain crosses the membrane as a helical span at residues 1-21 (MGGISIWQLLIIAVIVVLLFG). Residues 41–88 (KAMGDENQKETNNAEKTTNDADFDTKNLAQKTSTEEKSTTESKNKEQV) form a disordered region. Composition is skewed to basic and acidic residues over residues 42–65 (AMGDENQKETNNAEKTTNDADFDT) and 73–88 (STEEKSTTESKNKEQV).

Belongs to the TatA/E family. As to quaternary structure, the Tat system comprises two distinct complexes: a TatABC complex, containing multiple copies of TatA, TatB and TatC subunits, and a separate TatA complex, containing only TatA subunits. Substrates initially bind to the TatABC complex, which probably triggers association of the separate TatA complex to form the active translocon.

The protein localises to the cell inner membrane. Part of the twin-arginine translocation (Tat) system that transports large folded proteins containing a characteristic twin-arginine motif in their signal peptide across membranes. TatA could form the protein-conducting channel of the Tat system. This Proteus mirabilis (strain HI4320) protein is Sec-independent protein translocase protein TatA.